A 306-amino-acid polypeptide reads, in one-letter code: Serine/threonine-protein phosphatase PP2A-1 catalytic subunit (306 aa).

D54, H56, D82, and N114 together coordinate Mn(2+). The Proton donor role is filled by H115. Mn(2+) contacts are provided by H164 and H238. At L306 the chain carries Leucine methyl ester.

This sequence belongs to the PPP phosphatase family. PP-2A subfamily. PP2A consists of a common heterodimeric core enzyme, composed of a 36 kDa catalytic subunit (subunit C) and a 65 kDa constant regulatory subunit (subunit A), that associates with a variety of regulatory subunits such as subunits B (the R2/B/PR55/B55, R3/B''/PR72/PR130/PR59 and R5/B'/B56 families). Interacts with TAF12B. Interacts with SRK2E/OST1. Interacts with TAP46. Mn(2+) serves as cofactor. Reversibly methyl esterified on Leu-306 by leucine carboxyl methyltransferase 1 (LCMT1) and pectin methylesterase 1 (PME1). Carboxyl methylation influences the affinity of the catalytic subunit for the different regulatory subunits, thereby modulating the PP2A holoenzyme's substrate specificity, enzyme activity and cellular localization. Post-translationally, phosphorylation of either threonine (by autophosphorylation-activated protein kinase) or tyrosine results in inactivation of the phosphatase. Auto-dephosphorylation has been suggested as a mechanism for reactivation.

It is found in the cytoplasm. It carries out the reaction O-phospho-L-seryl-[protein] + H2O = L-seryl-[protein] + phosphate. The catalysed reaction is O-phospho-L-threonyl-[protein] + H2O = L-threonyl-[protein] + phosphate. The chain is Serine/threonine-protein phosphatase PP2A-1 catalytic subunit from Arabidopsis thaliana (Mouse-ear cress).